Consider the following 261-residue polypeptide: 1-(5-phosphoribosyl)-5-[(5-phosphoribosylamino)methylideneamino] imidazole-4-carboxamide isomerase (261 aa).

Asp8 acts as the Proton acceptor in catalysis. Asp139 acts as the Proton donor in catalysis.

Belongs to the HisA/HisF family.

It localises to the cytoplasm. It carries out the reaction 1-(5-phospho-beta-D-ribosyl)-5-[(5-phospho-beta-D-ribosylamino)methylideneamino]imidazole-4-carboxamide = 5-[(5-phospho-1-deoxy-D-ribulos-1-ylimino)methylamino]-1-(5-phospho-beta-D-ribosyl)imidazole-4-carboxamide. It participates in amino-acid biosynthesis; L-histidine biosynthesis; L-histidine from 5-phospho-alpha-D-ribose 1-diphosphate: step 4/9. The protein is 1-(5-phosphoribosyl)-5-[(5-phosphoribosylamino)methylideneamino] imidazole-4-carboxamide isomerase of Janthinobacterium sp. (strain Marseille) (Minibacterium massiliensis).